The primary structure comprises 439 residues: Hemagglutinin-esterase (439 aa).

The signal sequence occupies residues 1–22 (MGRMCIAMAPRTLLLLIGCQLV). The interval 12-132 (TLLLLIGCQL…DNNKWMGNKA (121 aa)) is esterase domain 1. Residues 23–407 (FGFNEPINIV…PVCLYDPLPV (385 aa)) are Virion surface-facing. Ser-45 acts as the Nucleophile in catalysis. Cys-49 and Cys-70 form a disulfide bridge. Asn-94 is a glycosylation site (N-linked (GlcNAc...) asparagine; by host). Cys-118 and Cys-167 form a disulfide bridge. Residues 133 to 281 (RFYALLYKKM…GNYKAVSLEY (149 aa)) are receptor binding. 4 N-linked (GlcNAc...) asparagine; by host glycosylation sites follow: Asn-196, Asn-246, Asn-309, and Asn-316. 2 cysteine pairs are disulfide-bonded: Cys-202–Cys-291 and Cys-210–Cys-264. Positions 282-395 (LLTIPSKAIC…HCPTAANIGY (114 aa)) are esterase domain 2. A disulfide bridge links Cys-322 with Cys-327. An N-linked (GlcNAc...) asparagine; by host glycan is attached at Asn-331. Catalysis depends on charge relay system residues Asp-342 and His-345. Residues Asn-360 and Asn-374 are each glycosylated (N-linked (GlcNAc...) asparagine; by host). Cysteines 363 and 387 form a disulfide. Residues 408-428 (ILLGVLLGIAVLIIVFLILYF) form a helical membrane-spanning segment. The Intravirion portion of the chain corresponds to 429–439 (MADSSVRLHEA).

Belongs to the influenza type C/coronaviruses hemagglutinin-esterase family. As to quaternary structure, homodimer; disulfide-linked. Forms a complex with the M protein in the pre-Golgi. Associates then with S-M complex to form a ternary complex S-M-HE. Post-translationally, N-glycosylated in the host RER.

The protein resides in the virion membrane. The protein localises to the host cell membrane. It catalyses the reaction N-acetyl-9-O-acetylneuraminate + H2O = N-acetylneuraminate + acetate + H(+). It carries out the reaction N-acetyl-4-O-acetylneuraminate + H2O = N-acetylneuraminate + acetate + H(+). Functionally, structural protein that makes short spikes at the surface of the virus. Contains receptor binding and receptor-destroying activities. Mediates de-O-acetylation of N-acetyl-4-O-acetylneuraminic acid, which is probably the receptor determinant recognized by the virus on the surface of erythrocytes and susceptible cells. This receptor-destroying activity is important for virus release as it probably helps preventing self-aggregation and ensures the efficient spread of the progeny virus from cell to cell. May serve as a secondary viral attachment protein for initiating infection, the spike protein being the major one. May become a target for both the humoral and the cellular branches of the immune system. The polypeptide is Hemagglutinin-esterase (Rat coronavirus (strain 681) (RCV-SDAV)).